A 74-amino-acid polypeptide reads, in one-letter code: Protein krueppel (74 aa).

4 consecutive C2H2-type zinc fingers follow at residues 1–4 (ERTH), 10–32 (FECS…MRLH), 38–60 (YHCT…LRVH), and 66–74 (YACELCASR).

This sequence belongs to the krueppel C2H2-type zinc-finger protein family.

It is found in the nucleus. Krueppel is a gap class segmentation protein. This Euscelis plebejus (Leafhopper) protein is Protein krueppel (Kr).